A 168-amino-acid chain; its full sequence is Sperm acrosome-associated protein 9 (168 aa).

As to quaternary structure, microtubule inner protein component of sperm flagellar doublet microtubules. Interacts with CABP1 and CALR. Interacts with INCA1. Interacts with microtubules. Expressed in sperm (at protein level). Expressed from almost all the cell types of testis, with abundant expression in round and elongated spermatids (at protein level). Predominantly expressed in tissues containing motile cilia.

Its subcellular location is the cytoplasm. It localises to the cytoplasmic vesicle. The protein resides in the secretory vesicle. It is found in the acrosome. The protein localises to the cytoskeleton. Its subcellular location is the cilium basal body. It localises to the flagellum axoneme. The protein resides in the cilium axoneme. It is found in the nucleus. Microtubule inner protein (MIP) part of the dynein-decorated doublet microtubules (DMTs) of multiciliated respiratory cells and the distal singlet microtubules of monoflagellated spermatozoa. Forms an extensive interaction network cross-linking the lumen of axonemal doublet microtubules. This chain is Sperm acrosome-associated protein 9, found in Mus musculus (Mouse).